The chain runs to 124 residues: Large ribosomal subunit protein uL18 (124 aa).

This sequence belongs to the universal ribosomal protein uL18 family. As to quaternary structure, part of the 50S ribosomal subunit; part of the 5S rRNA/L5/L18/L25 subcomplex. Contacts the 5S and 23S rRNAs.

This is one of the proteins that bind and probably mediate the attachment of the 5S RNA into the large ribosomal subunit, where it forms part of the central protuberance. In Thermomicrobium roseum (strain ATCC 27502 / DSM 5159 / P-2), this protein is Large ribosomal subunit protein uL18.